Reading from the N-terminus, the 128-residue chain is Large ribosomal subunit protein bL12 (128 aa).

Belongs to the bacterial ribosomal protein bL12 family. In terms of assembly, homodimer. Part of the ribosomal stalk of the 50S ribosomal subunit. Forms a multimeric L10(L12)X complex, where L10 forms an elongated spine to which 2 to 4 L12 dimers bind in a sequential fashion. Binds GTP-bound translation factors.

Forms part of the ribosomal stalk which helps the ribosome interact with GTP-bound translation factors. Is thus essential for accurate translation. The protein is Large ribosomal subunit protein bL12 of Rubrobacter xylanophilus (strain DSM 9941 / JCM 11954 / NBRC 16129 / PRD-1).